Reading from the N-terminus, the 211-residue chain is MRLHVVDHPLVAHKLTTLRDQRTDSATFRRLADELVTLLAYEATRDVRTEQVDIHTPVSRTTGVKLSHPRPLVVPILRAGLGMLDGMVRLLPTAEVGFLGMVRNEETLQASTYATRMPDDLSGRQVYVLDPMLATGGTLVASIRELIKRGADDVTAVVLLAAPEGVELMERELAGTPVTVVTASVDERLNEQGYIVPGLGDAGDRMYGAAE.

Residues Arg78, Arg103, and 130 to 138 (DPMLATGGT) each bind 5-phospho-alpha-D-ribose 1-diphosphate. Uracil is bound by residues Ile195 and 200–202 (GDA). Residue Asp201 coordinates 5-phospho-alpha-D-ribose 1-diphosphate.

This sequence belongs to the UPRTase family. Requires Mg(2+) as cofactor.

The enzyme catalyses UMP + diphosphate = 5-phospho-alpha-D-ribose 1-diphosphate + uracil. The protein operates within pyrimidine metabolism; UMP biosynthesis via salvage pathway; UMP from uracil: step 1/1. Its activity is regulated as follows. Allosterically activated by GTP. In terms of biological role, catalyzes the conversion of uracil and 5-phospho-alpha-D-ribose 1-diphosphate (PRPP) to UMP and diphosphate. This Streptomyces coelicolor (strain ATCC BAA-471 / A3(2) / M145) protein is Uracil phosphoribosyltransferase.